A 259-amino-acid polypeptide reads, in one-letter code: Deoxyribose-phosphate aldolase (259 aa).

The active-site Proton donor/acceptor is the Asp102. Lys167 functions as the Schiff-base intermediate with acetaldehyde in the catalytic mechanism. The active-site Proton donor/acceptor is the Lys201.

It belongs to the DeoC/FbaB aldolase family. DeoC type 2 subfamily.

Its subcellular location is the cytoplasm. It carries out the reaction 2-deoxy-D-ribose 5-phosphate = D-glyceraldehyde 3-phosphate + acetaldehyde. Its pathway is carbohydrate degradation; 2-deoxy-D-ribose 1-phosphate degradation; D-glyceraldehyde 3-phosphate and acetaldehyde from 2-deoxy-alpha-D-ribose 1-phosphate: step 2/2. In terms of biological role, catalyzes a reversible aldol reaction between acetaldehyde and D-glyceraldehyde 3-phosphate to generate 2-deoxy-D-ribose 5-phosphate. This is Deoxyribose-phosphate aldolase from Escherichia fergusonii (strain ATCC 35469 / DSM 13698 / CCUG 18766 / IAM 14443 / JCM 21226 / LMG 7866 / NBRC 102419 / NCTC 12128 / CDC 0568-73).